A 1401-amino-acid chain; its full sequence is DNA-directed RNA polymerase subunit beta (1401 aa).

Belongs to the RNA polymerase beta chain family. In terms of assembly, the RNAP catalytic core consists of 2 alpha, 1 beta, 1 beta' and 1 omega subunit. When a sigma factor is associated with the core the holoenzyme is formed, which can initiate transcription.

The enzyme catalyses RNA(n) + a ribonucleoside 5'-triphosphate = RNA(n+1) + diphosphate. DNA-dependent RNA polymerase catalyzes the transcription of DNA into RNA using the four ribonucleoside triphosphates as substrates. This is DNA-directed RNA polymerase subunit beta from Zymomonas mobilis subsp. mobilis (strain ATCC 31821 / ZM4 / CP4).